We begin with the raw amino-acid sequence, 34 residues long: Photosystem II reaction center protein M (34 aa).

The helical transmembrane segment at 5–25 (ILALIAIALFISVPTAFLIII) threads the bilayer.

This sequence belongs to the PsbM family. In terms of assembly, PSII is composed of 1 copy each of membrane proteins PsbA, PsbB, PsbC, PsbD, PsbE, PsbF, PsbH, PsbI, PsbJ, PsbK, PsbL, PsbM, PsbT, PsbX, PsbY, PsbZ, Psb30/Ycf12, at least 3 peripheral proteins of the oxygen-evolving complex and a large number of cofactors. It forms dimeric complexes.

It is found in the plastid. The protein resides in the chloroplast thylakoid membrane. Its function is as follows. One of the components of the core complex of photosystem II (PSII). PSII is a light-driven water:plastoquinone oxidoreductase that uses light energy to abstract electrons from H(2)O, generating O(2) and a proton gradient subsequently used for ATP formation. It consists of a core antenna complex that captures photons, and an electron transfer chain that converts photonic excitation into a charge separation. This subunit is found at the monomer-monomer interface. The polypeptide is Photosystem II reaction center protein M (Gnetum parvifolium (Small-leaved jointfir)).